Consider the following 347-residue polypeptide: Heat-inducible transcription repressor HrcA (347 aa).

Belongs to the HrcA family.

Its function is as follows. Negative regulator of class I heat shock genes (grpE-dnaK-dnaJ and groELS operons). Prevents heat-shock induction of these operons. The polypeptide is Heat-inducible transcription repressor HrcA (Enterococcus faecalis (strain ATCC 700802 / V583)).